We begin with the raw amino-acid sequence, 356 residues long: MDVASARSISSHPSYYGKPICSSQSSLIRISRDKVCCFGRISNGMTSFTTSLHAVPSEKFMGETRRTGIQWSNRSLRHDPYRFLDKKSPRSSQLARDITVRADLSGAATPDSSFPEPEIKLSSRLRGIFFCVVAGISATFLIVLMIIGHPFVLLFDPYRRKFHHFIAKLWASISIYPFYKINIEGLENLPSSDTPAVYVSNHQSFLDIYTLLSLGKSFKFISKTGIFVIPIIGWAMSMMGVVPLKRMDPRSQVDCLKRCMELLKKGASVFFFPEGTRSKDGRLGSFKKGAFTVAAKTGVAVVPITLMGTGKIMPTGSEGILNHGNVRVIIHKPIHGSKADVLCNEARSKIAESMDL.

The N-terminal 56 residues, 1-56 (MDVASARSISSHPSYYGKPICSSQSSLIRISRDKVCCFGRISNGMTSFTTSLHAVP), are a transit peptide targeting the chloroplast. Residues 127 to 147 (GIFFCVVAGISATFLIVLMII) form a helical membrane-spanning segment. The HXXXXD motif motif lies at 202–207 (HQSFLD). The chain crosses the membrane as a helical span at residues 224–244 (TGIFVIPIIGWAMSMMGVVPL).

This sequence belongs to the 1-acyl-sn-glycerol-3-phosphate acyltransferase family. As to expression, widely expressed. Expressed at higher level in leaves. Expressed at lower level in silique walls compared to leaves.

Its subcellular location is the plastid. The protein resides in the chloroplast membrane. It catalyses the reaction a fatty acyl-[ACP] + a 1-acyl-sn-glycero-3-phosphate = a 1,2-diacyl-sn-glycero-3-phosphate + holo-[ACP]. The enzyme catalyses a 1-acyl-sn-glycero-3-phosphate + an acyl-CoA = a 1,2-diacyl-sn-glycero-3-phosphate + CoA. The protein operates within phospholipid metabolism; CDP-diacylglycerol biosynthesis; CDP-diacylglycerol from sn-glycerol 3-phosphate: step 2/3. Its function is as follows. Plastidial enzyme of the prokaryotic glycerol-3-phosphate pathway that converts lysophosphatidic acid (LPA) into phosphatidic acid by incorporating an acyl moiety at position sn-2. Utilizes palmitoyl-ACP (16:0-ACP) to produce phosphatidic acid containing a saturated group at position sn-2, which is characteristic of lipids synthesized by the prokaryotic pathway. In vitro, can use 16:0-CoA as acyl donor. Essential for embryo development during the transition from the globular to the heart stage when chloroplasts begin to form. This is 1-acyl-sn-glycerol-3-phosphate acyltransferase LPAT1, chloroplastic from Arabidopsis thaliana (Mouse-ear cress).